Here is an 81-residue protein sequence, read N- to C-terminus: MKLTCVMIVAVLFLTAWTFVTADDSKNGLENHFWKARDEMKNREASKLDKKEACYAPGTFCGIKPGLCCSEFCLPGVCFGG.

The signal sequence occupies residues Met1–Ala22. A propeptide spanning residues Asp23–Asp49 is cleaved from the precursor. 3 disulfide bridges follow: Cys54/Cys69, Cys61/Cys73, and Cys68/Cys78. 4-hydroxyproline is present on residues Pro57 and Pro65. A Glycine amide; in form delta-conotoxin PVIA modification is found at Gly80.

In terms of processing, the difference between delta-conotoxin PVIA and [deamido]-delta-conotoxin PVIA lies in the state of amidation of Gly-80. In terms of tissue distribution, expressed by the venom duct.

Its subcellular location is the secreted. Functionally, delta-conotoxins bind to site 6 of voltage-gated sodium channels (Nav) and inhibit the inactivation process. This toxin shows weak effects on rNav1.2/SCN2A (EC(50)=2.9 uM), rNav1.4/SCN4A (EC(50)=5.2 uM), hNav1.7/SCN9A (EC(50)=1.9 uM) and rNav1.7/SCN9A (EC(50)=6.4 uM). In vivo, this toxin shows different effects. In mice, injection of this toxin causes hyperactivity, rapid running, limb extension, and death. In fish, the peptide elicites spurts of rapid swimming, with twisted motions, quivering fins and the lockjaw extended mouth syndrome. Rigid paralysis and death are observed at higher doses. In mollusks, this peptide is inactive. Injection of this peptide together with the kappa-conotoxin PVIIA causes the sudden tetanus of prey (STOP) syndrome, which is a single, lethal 'fin-pop' in envenomed fish. This is Delta-conotoxin PVIA from Conus purpurascens (Purple cone).